We begin with the raw amino-acid sequence, 129 residues long: Large ribosomal subunit protein bL12 (129 aa).

This sequence belongs to the bacterial ribosomal protein bL12 family. As to quaternary structure, homodimer. Part of the ribosomal stalk of the 50S ribosomal subunit. Forms a multimeric L10(L12)X complex, where L10 forms an elongated spine to which 2 to 4 L12 dimers bind in a sequential fashion. Binds GTP-bound translation factors.

Its function is as follows. Forms part of the ribosomal stalk which helps the ribosome interact with GTP-bound translation factors. Is thus essential for accurate translation. In Maridesulfovibrio salexigens (strain ATCC 14822 / DSM 2638 / NCIMB 8403 / VKM B-1763) (Desulfovibrio salexigens), this protein is Large ribosomal subunit protein bL12.